Reading from the N-terminus, the 402-residue chain is Type II NADH:quinone oxidoreductase (402 aa).

FAD contacts are provided by residues Gly-12–Ala-16, Asn-39–Lys-40, and Val-83. Glu-172 is an active-site residue. FAD contacts are provided by residues Asp-302, Ala-319–Gln-320, and Lys-379.

Belongs to the NADH dehydrogenase family. FAD serves as cofactor.

The protein resides in the cell membrane. The enzyme catalyses a quinone + NADH + H(+) = a quinol + NAD(+). Its function is as follows. Alternative, nonproton pumping NADH:quinone oxidoreductase that delivers electrons to the respiratory chain by oxidation of NADH and reduction of quinones, and contributes to the regeneration of NAD(+). The polypeptide is Type II NADH:quinone oxidoreductase (Staphylococcus aureus (strain MSSA476)).